We begin with the raw amino-acid sequence, 1295 residues long: Phosphoribosylformylglycinamidine synthase (1295 aa).

Residues 304–326 (WPGAATGSGGEIRDEGATGRGAK) form a disordered region. ATP-binding positions include 306-317 (GAATGSGGEIRD), 385-387 (TGY), and A677. Residues D678, E717, N721, and D884 each contribute to the Mg(2+) site. A compositionally biased stretch (basic and acidic residues) spans 995-1012 (LRDNPESADQEHASRQDD). The disordered stretch occupies residues 995–1017 (LRDNPESADQEHASRQDDNDPGL). The Glutamine amidotransferase type-1 domain occupies 1042–1295 (VAVLREQGVN…LFRNARKQLG (254 aa)). C1135 serves as the catalytic Nucleophile. Residues H1260 and E1262 contribute to the active site.

It in the N-terminal section; belongs to the FGAMS family. Monomer.

The protein resides in the cytoplasm. The catalysed reaction is N(2)-formyl-N(1)-(5-phospho-beta-D-ribosyl)glycinamide + L-glutamine + ATP + H2O = 2-formamido-N(1)-(5-O-phospho-beta-D-ribosyl)acetamidine + L-glutamate + ADP + phosphate + H(+). Its pathway is purine metabolism; IMP biosynthesis via de novo pathway; 5-amino-1-(5-phospho-D-ribosyl)imidazole from N(2)-formyl-N(1)-(5-phospho-D-ribosyl)glycinamide: step 1/2. Phosphoribosylformylglycinamidine synthase involved in the purines biosynthetic pathway. Catalyzes the ATP-dependent conversion of formylglycinamide ribonucleotide (FGAR) and glutamine to yield formylglycinamidine ribonucleotide (FGAM) and glutamate. The polypeptide is Phosphoribosylformylglycinamidine synthase (Sodalis glossinidius (strain morsitans)).